The following is a 977-amino-acid chain: Ubiquitin-like modifier-activating enzyme 7 (977 aa).

The protein belongs to the ubiquitin-activating E1 family. Ubiquitinated by RNF170.

It is found in the cytoplasm. The protein resides in the nucleus. It functions in the pathway protein modification; protein ubiquitination. Its function is as follows. E1-activating enzyme that catalyzes the covalent conjugation of the ubiquitin-like protein product of ISG15 to additional interferons stimulated proteins (ISGs) as well as other cellular proteins such as P53 in a process termed protein ISGylation. Plays an essential role in antiviral immunity together with ISG15 by restricting the replication of many viruses including rabies virus, influenza virus, sindbis virus or rotavirus. The sequence is that of Ubiquitin-like modifier-activating enzyme 7 from Mus musculus (Mouse).